The primary structure comprises 218 residues: 3,4-dihydroxy-2-butanone 4-phosphate synthase (218 aa).

D-ribulose 5-phosphate contacts are provided by residues 38 to 39, Asp43, 151 to 155, and Glu175; these read RE and RRGHT. Glu39 contributes to the Mg(2+) binding site. His154 is a binding site for Mg(2+).

This sequence belongs to the DHBP synthase family. In terms of assembly, homodimer. Requires Mg(2+) as cofactor. Mn(2+) serves as cofactor.

The catalysed reaction is D-ribulose 5-phosphate = (2S)-2-hydroxy-3-oxobutyl phosphate + formate + H(+). The protein operates within cofactor biosynthesis; riboflavin biosynthesis; 2-hydroxy-3-oxobutyl phosphate from D-ribulose 5-phosphate: step 1/1. Its function is as follows. Catalyzes the conversion of D-ribulose 5-phosphate to formate and 3,4-dihydroxy-2-butanone 4-phosphate. This chain is 3,4-dihydroxy-2-butanone 4-phosphate synthase, found in Vibrio atlanticus (strain LGP32) (Vibrio splendidus (strain Mel32)).